The sequence spans 207 residues: MTLPDVSGSLGPLSPGTNGTLWAVGPRVVRYQIPALAYLTPGALWTLRTRGTSLTSGPIGTRDSIRTLHAVHYDVWTLGPLGPLGPTSPRGPSARPCRLQTDSLHSTDARCYRCKMLQMQDATDARCKKDMSPFSFPGILEPSHLVGSLKSPRVDPGVPCRPLALWGHPYQCLRLVPLYQRCLHPHCFPAAPGRPWDPWCRPDRLDP.

This is an uncharacterized protein from Frog virus 3 (isolate Goorha) (FV-3).